The sequence spans 44 residues: MRCLPVFVILLLLIASAPSVDDNAKGTQHKRIINWCCLTFYQCC.

Residues 1–19 (MRCLPVFVILLLLIASAPS) form the signal peptide. A propeptide spanning residues 20–29 (VDDNAKGTQH) is cleaved from the precursor.

It belongs to the conotoxin T superfamily. In terms of processing, contains 2 disulfide bonds that can be either 'C1-C3, C2-C4' or 'C1-C4, C2-C3', since these disulfide connectivities have been observed for conotoxins with cysteine framework V (for examples, see AC P0DQQ7 and AC P81755). As to expression, expressed by the venom duct.

The protein localises to the secreted. In Conus spurius (Alphabet cone), this protein is Conotoxin Sr5.5.